Consider the following 415-residue polypeptide: uncharacterized protein (415 aa).

Disordered regions lie at residues Phe-39–His-77, Ala-220–Thr-247, and Val-346–Lys-415. Basic and acidic residues-rich tracts occupy residues Ala-220–Asn-238, Asp-365–Met-380, and Ser-400–Lys-415.

This is an uncharacterized protein from Rattus norvegicus (Rat).